The following is a 494-amino-acid chain: tRNA-2-methylthio-N(6)-dimethylallyladenosine synthase (494 aa).

Residues 5–121 enclose the MTTase N-terminal domain; sequence RTYQVRTYGC…LPALLERARV (117 aa). The [4Fe-4S] cluster site is built by cysteine 14, cysteine 50, cysteine 84, cysteine 158, cysteine 162, and cysteine 165. The Radical SAM core domain occupies 144–374; it reads RESVYAAWVA…LELQERISEE (231 aa). The TRAM domain occupies 377 to 446; sequence AKFVGREVEV…PHHLVADSGI (70 aa). Residues 458 to 468 are compositionally biased toward basic and acidic residues; it reads WEARNAPERRP. A disordered region spans residues 458–494; the sequence is WEARNAPERRPTGVLLGMPKVGAPEPQPSVVGGCCDS.

This sequence belongs to the methylthiotransferase family. MiaB subfamily. In terms of assembly, monomer. Requires [4Fe-4S] cluster as cofactor.

The protein localises to the cytoplasm. The catalysed reaction is N(6)-dimethylallyladenosine(37) in tRNA + (sulfur carrier)-SH + AH2 + 2 S-adenosyl-L-methionine = 2-methylsulfanyl-N(6)-dimethylallyladenosine(37) in tRNA + (sulfur carrier)-H + 5'-deoxyadenosine + L-methionine + A + S-adenosyl-L-homocysteine + 2 H(+). In terms of biological role, catalyzes the methylthiolation of N6-(dimethylallyl)adenosine (i(6)A), leading to the formation of 2-methylthio-N6-(dimethylallyl)adenosine (ms(2)i(6)A) at position 37 in tRNAs that read codons beginning with uridine. In Thermobifida fusca (strain YX), this protein is tRNA-2-methylthio-N(6)-dimethylallyladenosine synthase.